The chain runs to 76 residues: Ovarian cancer-related protein 1 (76 aa).

This Homo sapiens (Human) protein is Ovarian cancer-related protein 1 (OCR1).